The chain runs to 162 residues: 2-C-methyl-D-erythritol 2,4-cyclodiphosphate synthase (162 aa).

A divalent metal cation contacts are provided by Asp12 and His14. Residues 12–14 (DVH) and 38–39 (HS) each bind 4-CDP-2-C-methyl-D-erythritol 2-phosphate. His46 is an a divalent metal cation binding site. 4-CDP-2-C-methyl-D-erythritol 2-phosphate is bound by residues 60–62 (DIG), 136–139 (TTTE), Phe143, and Arg146.

The protein belongs to the IspF family. In terms of assembly, homotrimer. It depends on a divalent metal cation as a cofactor.

It catalyses the reaction 4-CDP-2-C-methyl-D-erythritol 2-phosphate = 2-C-methyl-D-erythritol 2,4-cyclic diphosphate + CMP. It functions in the pathway isoprenoid biosynthesis; isopentenyl diphosphate biosynthesis via DXP pathway; isopentenyl diphosphate from 1-deoxy-D-xylulose 5-phosphate: step 4/6. Its function is as follows. Involved in the biosynthesis of isopentenyl diphosphate (IPP) and dimethylallyl diphosphate (DMAPP), two major building blocks of isoprenoid compounds. Catalyzes the conversion of 4-diphosphocytidyl-2-C-methyl-D-erythritol 2-phosphate (CDP-ME2P) to 2-C-methyl-D-erythritol 2,4-cyclodiphosphate (ME-CPP) with a corresponding release of cytidine 5-monophosphate (CMP). This is 2-C-methyl-D-erythritol 2,4-cyclodiphosphate synthase from Porphyromonas gingivalis (strain ATCC 33277 / DSM 20709 / CIP 103683 / JCM 12257 / NCTC 11834 / 2561).